Reading from the N-terminus, the 268-residue chain is UPF0328 protein ECU09_2030 (268 aa).

This sequence belongs to the UPF0328 family.

In Encephalitozoon cuniculi (strain GB-M1) (Microsporidian parasite), this protein is UPF0328 protein ECU09_2030.